The primary structure comprises 642 residues: Zinc finger protein 14 (642 aa).

The KRAB domain maps to 4-76 (VSFEDVAVNF…MVERLCESRR (73 aa)). The C2H2-type 1 zinc finger occupies 103-125 (HECSFCGRDFIHHSSLNRHMRSH). The C2H2-type 2; degenerate zinc-finger motif lies at 141-163 (CKCKAVGKTFSYHHCFRKHERTH). Residues 169–191 (YECKQCGKAFIYYQPFQRHERTH) form a C2H2-type 3 zinc finger. The C2H2-type 4; atypical zinc-finger motif lies at 197 to 217 (YECKQCGKTFIYYQSFQKHAH). C2H2-type zinc fingers lie at residues 223-245 (YECK…KRTH), 251-273 (YECK…ERTH), 279-301 (YKCK…KRTH), 307-329 (YECK…VIIH), 335-357 (YKCK…ERTH), 363-385 (YECK…ERTH), 391-413 (YECK…ETTH), 419-441 (YECK…ERTH), 447-469 (YECK…ERSH), 475-497 (YECK…ERTH), 503-525 (YECK…EKIH), 531-553 (FECK…ERTH), 559-581 (YQCK…ERTH), 587-609 (YRCK…ERSH), and 615-637 (YECK…ERTH).

It belongs to the krueppel C2H2-type zinc-finger protein family.

It localises to the nucleus. May be involved in transcriptional regulation. The chain is Zinc finger protein 14 (ZNF14) from Homo sapiens (Human).